The primary structure comprises 333 residues: Casein kinase II subunit beta-1 (333 aa).

Residues Val58 to Ser78 are compositionally biased toward acidic residues. 2 disordered regions span residues Val58–His92 and Ala282–Leu333. Residues Ala305–Lys316 show a composition bias toward basic residues.

It belongs to the casein kinase 2 subunit beta family. As to quaternary structure, tetramer composed of two alpha chains, one beta chain and one beta' chain. In terms of processing, phosphorylated by alpha subunit.

Its function is as follows. Regulatory subunit of casein kinase II/CK2. As part of the kinase complex regulates the basal catalytic activity of the alpha subunit a constitutively active serine/threonine-protein kinase that phosphorylates a large number of substrates containing acidic residues C-terminal to the phosphorylated serine or threonine. The polypeptide is Casein kinase II subunit beta-1 (ckb-1) (Neurospora crassa (strain ATCC 24698 / 74-OR23-1A / CBS 708.71 / DSM 1257 / FGSC 987)).